Here is a 526-residue protein sequence, read N- to C-terminus: Keratin, type I cytoskeletal 10 (526 aa).

The span at 1 to 15 shows a compositional bias: low complexity; sequence MSVRYSSSKQYSSSR. Residues 1–29 are disordered; the sequence is MSVRYSSSKQYSSSRSGGGGGGGSSLRIS. Positions 1–126 are head; the sequence is MSVRYSSSKQ…FGDGGLISGN (126 aa). 6 positions are modified to phosphoserine: Ser14, Ser16, Ser34, Ser45, Ser48, and Ser151. A coil 1A region spans residues 127-162; the sequence is QKITMQNLNDRLASYLDKVRALEESNYELEVKIKEW. Residues 127-441 form the IF rod domain; the sequence is QKITMQNLND…SLLEGEGSSG (315 aa). The linker 1 stretch occupies residues 163–183; the sequence is YEKYGNSRQREPRDYSKYYQT. The interval 184–275 is coil 1B; that stretch reads IDDLKNQIFN…KNHEEEMRDL (92 aa). The tract at residues 276-298 is linker 12; that stretch reads QNVSTGDVNVEMNAAPGVDLTEL. A coil 2 region spans residues 299 to 437; sequence LNNMRSQYEQ…QTYRSLLEGE (139 aa). The tract at residues 438–526 is tail; sequence GSSGGGSYGG…GESSSKGPRY (89 aa). Positions 458-505 are enriched in gly residues; the sequence is GGGGYGGGSSSGGYGGGSSSGGGHGGSSGGSYGGGSSSGGGHGGGSSS. The segment at 458 to 526 is disordered; sequence GGGGYGGGSS…GESSSKGPRY (69 aa). Low complexity predominate over residues 506–526; that stretch reads GGHKSTTTGSVGESSSKGPRY.

Belongs to the intermediate filament family. As to quaternary structure, heterotetramer of two type I and two type II keratins. Heterodimer with KRT1. Two heterodimers of KRT1 and KRT10 form a heterotetramer. The KRT10 subunit in the heterotetramer is probably disulfide-linked.

The protein resides in the secreted. Its subcellular location is the extracellular space. The protein localises to the cell surface. It localises to the cytoplasm. In terms of biological role, plays a role in the establishment of the epidermal barrier on plantar skin. Involved in the maintenance of cell layer development and keratin filament bundles in suprabasal cells of the epithelium. The polypeptide is Keratin, type I cytoskeletal 10 (KRT10) (Bos taurus (Bovine)).